Here is a 78-residue protein sequence, read N- to C-terminus: Large ribosomal subunit protein bL28 (78 aa).

This sequence belongs to the bacterial ribosomal protein bL28 family.

The chain is Large ribosomal subunit protein bL28 from Prochlorococcus marinus (strain MIT 9211).